The chain runs to 88 residues: Small ribosomal subunit protein bS20 (88 aa).

The protein belongs to the bacterial ribosomal protein bS20 family.

In terms of biological role, binds directly to 16S ribosomal RNA. The polypeptide is Small ribosomal subunit protein bS20 (Bartonella henselae (strain ATCC 49882 / DSM 28221 / CCUG 30454 / Houston 1) (Rochalimaea henselae)).